The chain runs to 680 residues: WD repeat-containing protein 48 homolog (680 aa).

8 WD repeats span residues 26-65 (QHRN…SEKY), 71-110 (HHND…CMST), 113-152 (THRD…ALTA), 164-203 (GSKD…RSMK), 206-245 (GHTE…CVQT), 248-287 (VHKE…NKTL), 290-329 (EEKA…RGTL), and 350-389 (KGGA…KKDT). Positions 594-618 (TPSGANANNSLQNSQSDGNSEGSQL) are disordered. Residues 596–609 (SGANANNSLQNSQS) show a composition bias toward low complexity.

The protein belongs to the WD repeat WDR48 family. In terms of assembly, catalytic component of the Usp12-46 deubiquitylase complex consisting of Usp12-46, Wdr20 and Uaf1; regulatory subunit that, together wtih Wdr20, stabilizes Usp12-46. The Usp12-46 deubiquitylase complex associates with arr/arrow; the interaction leads to deubiquitination and stabilization of arr/arrow.

In terms of biological role, regulatory component of the Usp12-46 deubiquitylase complex. activates deubiquitination by increasing the catalytic turnover without increasing the affinity of deubiquitinating enzymes for the substrate. The complex deubiquitylates the wg/wingless-signaling receptor arr/arrow, which stabilizes the receptor and increases its concentration at the cell surface; this enhances the sensitivity of cells to wg/wingless-signal stimulation. This increases the amplitude and spatial range of the signaling response to the wg/wingless morphogen gradient, facilitating the precise concentration-dependent regulation of its target genes. Together with Wdr20 and Usp12-46 required for wg/wingless-mediated signaling in the wing imaginal disc and for wg/wingless-dependent regulation of intestinal stem cell proliferation. The sequence is that of WD repeat-containing protein 48 homolog from Drosophila persimilis (Fruit fly).